We begin with the raw amino-acid sequence, 143 residues long: Adrenodoxin, mitochondrial (143 aa).

The N-terminal 19 residues, 1–19, are a transit peptide targeting the mitochondrion; that stretch reads CSAVAVRTLRPLSLSARAA. Residues 26–130 enclose the 2Fe-2S ferredoxin-type domain; that stretch reads ITVHFINRDG…NMTVRVPEAV (105 aa). [2Fe-2S] cluster is bound by residues Cys65, Cys71, Cys74, and Cys111.

This sequence belongs to the adrenodoxin/putidaredoxin family. [2Fe-2S] cluster is required as a cofactor.

It is found in the mitochondrion matrix. Functionally, essential for the synthesis of various steroid hormones. Participates in the reduction of mitochondrial cytochrome P450 for steroidogenesis. Transfers electrons from adrenodoxin reductase to CYP11A1, a cytochrome P450 that catalyzes cholesterol side-chain cleavage. Does not form a ternary complex with adrenodoxin reductase and CYP11A1 but shuttles between the two enzymes to transfer electrons. The sequence is that of Adrenodoxin, mitochondrial (FDX1) from Gallus gallus (Chicken).